The primary structure comprises 955 residues: 2-oxoglutarate dehydrogenase E1 component (955 aa).

It belongs to the alpha-ketoglutarate dehydrogenase family. As to quaternary structure, homodimer. Part of the 2-oxoglutarate dehydrogenase (OGDH) complex composed of E1 (2-oxoglutarate dehydrogenase), E2 (dihydrolipoamide succinyltransferase) and E3 (dihydrolipoamide dehydrogenase); the complex contains multiple copies of the three enzymatic components (E1, E2 and E3). Thiamine diphosphate is required as a cofactor.

It carries out the reaction N(6)-[(R)-lipoyl]-L-lysyl-[protein] + 2-oxoglutarate + H(+) = N(6)-[(R)-S(8)-succinyldihydrolipoyl]-L-lysyl-[protein] + CO2. In terms of biological role, E1 component of the 2-oxoglutarate dehydrogenase (OGDH) complex which catalyzes the decarboxylation of 2-oxoglutarate, the first step in the conversion of 2-oxoglutarate to succinyl-CoA and CO(2). The polypeptide is 2-oxoglutarate dehydrogenase E1 component (Bacillus cereus (strain B4264)).